The chain runs to 808 residues: DNA gyrase subunit B (808 aa).

Residues 429 to 544 (SELFIVEGDS…KGYLYIAQPP (116 aa)) form the Toprim domain. Mg(2+)-binding residues include Glu435, Asp509, and Asp511.

The protein belongs to the type II topoisomerase GyrB family. As to quaternary structure, heterotetramer, composed of two GyrA and two GyrB chains. In the heterotetramer, GyrA contains the active site tyrosine that forms a transient covalent intermediate with DNA, while GyrB binds cofactors and catalyzes ATP hydrolysis. It depends on Mg(2+) as a cofactor. The cofactor is Mn(2+). Ca(2+) serves as cofactor.

The protein localises to the cytoplasm. It carries out the reaction ATP-dependent breakage, passage and rejoining of double-stranded DNA.. Functionally, a type II topoisomerase that negatively supercoils closed circular double-stranded (ds) DNA in an ATP-dependent manner to modulate DNA topology and maintain chromosomes in an underwound state. Negative supercoiling favors strand separation, and DNA replication, transcription, recombination and repair, all of which involve strand separation. Also able to catalyze the interconversion of other topological isomers of dsDNA rings, including catenanes and knotted rings. Type II topoisomerases break and join 2 DNA strands simultaneously in an ATP-dependent manner. The polypeptide is DNA gyrase subunit B (Rickettsia bellii (strain RML369-C)).